The sequence spans 287 residues: AA9 family lytic polysaccharide monooxygenase C (287 aa).

A signal peptide spans Met-1–Ala-16. A Cu(2+)-binding site is contributed by His-17. Residue Asn-22 is glycosylated (N-linked (GlcNAc...) asparagine). Intrachain disulfides connect Cys-77–Cys-230 and Cys-200–Cys-284. His-114 serves as a coordination point for Cu(2+). O2-binding residues include His-216 and Gln-225. Tyr-227 lines the Cu(2+) pocket.

This sequence belongs to the polysaccharide monooxygenase AA9 family. The cofactor is Cu(2+).

Its subcellular location is the secreted. The enzyme catalyses [(1-&gt;4)-beta-D-glucosyl]n+m + reduced acceptor + O2 = 4-dehydro-beta-D-glucosyl-[(1-&gt;4)-beta-D-glucosyl]n-1 + [(1-&gt;4)-beta-D-glucosyl]m + acceptor + H2O.. Functionally, lytic polysaccharide monooxygenase (LPMO) that depolymerizes crystalline and amorphous polysaccharides via the oxidation of scissile alpha- or beta-(1-4)-glycosidic bonds, yielding C1 or C4 oxidation products. Catalysis by LPMOs requires the reduction of the active-site copper from Cu(II) to Cu(I) by a reducing agent and H(2)O(2) or O(2) as a cosubstrate. The sequence is that of AA9 family lytic polysaccharide monooxygenase C from Podospora anserina (strain S / ATCC MYA-4624 / DSM 980 / FGSC 10383) (Pleurage anserina).